The primary structure comprises 175 residues: Sialidase 85-1.3 (175 aa).

It belongs to the glycosyl hydrolase 33 family.

It catalyses the reaction Hydrolysis of alpha-(2-&gt;3)-, alpha-(2-&gt;6)-, alpha-(2-&gt;8)- glycosidic linkages of terminal sialic acid residues in oligosaccharides, glycoproteins, glycolipids, colominic acid and synthetic substrates.. Its function is as follows. Developmentally regulated neuraminidase implicated in parasite invasion of cells. May contribute to the pathology during T.cruzi infection by cleaving sialic acid from cells of the immune system. This Trypanosoma cruzi protein is Sialidase 85-1.3 (SA85-1.3).